Reading from the N-terminus, the 284-residue chain is RNase adapter protein RapZ (284 aa).

Residue 8 to 15 participates in ATP binding; sequence GRSGSGKS. 56-59 provides a ligand contact to GTP; it reads DVRN. The interval 266-284 is RNA-binding; the sequence is RSRGKNVQLRHRTLEKRKE.

Belongs to the RapZ-like family. RapZ subfamily. In terms of assembly, homotrimer.

In terms of biological role, modulates the synthesis of GlmS, by affecting the processing and stability of the regulatory small RNA GlmZ. When glucosamine-6-phosphate (GlcN6P) concentrations are high in the cell, RapZ binds GlmZ and targets it to cleavage by RNase E. Consequently, GlmZ is inactivated and unable to activate GlmS synthesis. Under low GlcN6P concentrations, RapZ is sequestered and inactivated by an other regulatory small RNA, GlmY, preventing GlmZ degradation and leading to synthesis of GlmS. In Hamiltonella defensa subsp. Acyrthosiphon pisum (strain 5AT), this protein is RNase adapter protein RapZ.